Here is a 275-residue protein sequence, read N- to C-terminus: 3-methyl-2-oxobutanoate hydroxymethyltransferase (275 aa).

2 residues coordinate Mg(2+): Asp49 and Asp88. Residues 49–50 (DS), Asp88, and Lys118 each bind 3-methyl-2-oxobutanoate. Glu120 contacts Mg(2+). The Proton acceptor role is filled by Glu187.

It belongs to the PanB family. In terms of assembly, homodecamer; pentamer of dimers. Requires Mg(2+) as cofactor.

The protein resides in the cytoplasm. The enzyme catalyses 3-methyl-2-oxobutanoate + (6R)-5,10-methylene-5,6,7,8-tetrahydrofolate + H2O = 2-dehydropantoate + (6S)-5,6,7,8-tetrahydrofolate. It participates in cofactor biosynthesis; (R)-pantothenate biosynthesis; (R)-pantoate from 3-methyl-2-oxobutanoate: step 1/2. Its function is as follows. Catalyzes the reversible reaction in which hydroxymethyl group from 5,10-methylenetetrahydrofolate is transferred onto alpha-ketoisovalerate to form ketopantoate. The protein is 3-methyl-2-oxobutanoate hydroxymethyltransferase of Rhodospirillum centenum (strain ATCC 51521 / SW).